The chain runs to 76 residues: MEMLLFLNESYIFHRLRMWSIVLWHSCVFVCAECGNANYRVPRCLIKPFSVPVTFPFSVKKNIRILDLDPRTEAYC.

It belongs to the UPF0377 family.

This chain is Putative UPF0377 protein YGL260W, found in Saccharomyces cerevisiae (strain ATCC 204508 / S288c) (Baker's yeast).